Here is a 111-residue protein sequence, read N- to C-terminus: Small ribosomal subunit protein bS16 (111 aa).

A disordered region spans residues 92–111 (MEVKAKNRKARPSKKEDKEA).

This sequence belongs to the bacterial ribosomal protein bS16 family.

In Rickettsia massiliae (strain Mtu5), this protein is Small ribosomal subunit protein bS16.